Consider the following 564-residue polypeptide: Proline--tRNA ligase (564 aa).

The protein belongs to the class-II aminoacyl-tRNA synthetase family. ProS type 1 subfamily. Homodimer.

The protein localises to the cytoplasm. The enzyme catalyses tRNA(Pro) + L-proline + ATP = L-prolyl-tRNA(Pro) + AMP + diphosphate. In terms of biological role, catalyzes the attachment of proline to tRNA(Pro) in a two-step reaction: proline is first activated by ATP to form Pro-AMP and then transferred to the acceptor end of tRNA(Pro). As ProRS can inadvertently accommodate and process non-cognate amino acids such as alanine and cysteine, to avoid such errors it has two additional distinct editing activities against alanine. One activity is designated as 'pretransfer' editing and involves the tRNA(Pro)-independent hydrolysis of activated Ala-AMP. The other activity is designated 'posttransfer' editing and involves deacylation of mischarged Ala-tRNA(Pro). The misacylated Cys-tRNA(Pro) is not edited by ProRS. This is Proline--tRNA ligase from Xylella fastidiosa (strain M12).